A 657-amino-acid chain; its full sequence is Methionine--tRNA ligase (657 aa).

The 'HIGH' region motif lies at 13–23; it reads YYPSGNLHIGH. A 'KMSKS' region motif is present at residues 308 to 312; sequence KMSKS. Residue lysine 311 participates in ATP binding. The tRNA-binding domain maps to 557 to 657; it reads DFDKVEIKAA…SAIPNGAVIK (101 aa).

It belongs to the class-I aminoacyl-tRNA synthetase family. MetG type 2B subfamily. As to quaternary structure, homodimer.

The protein resides in the cytoplasm. It catalyses the reaction tRNA(Met) + L-methionine + ATP = L-methionyl-tRNA(Met) + AMP + diphosphate. Its function is as follows. Is required not only for elongation of protein synthesis but also for the initiation of all mRNA translation through initiator tRNA(fMet) aminoacylation. In Staphylococcus aureus (strain MW2), this protein is Methionine--tRNA ligase.